The primary structure comprises 355 residues: uncharacterized protein (355 aa).

Residues 1–61 are disordered; it reads MNKKIEKNNN…PKRRGRRPKK (61 aa). Over residues 18-37 the composition is skewed to polar residues; sequence YESNTTDNQLIMKKNANSGS.

This is an uncharacterized protein from Acanthamoeba polyphaga mimivirus (APMV).